Consider the following 206-residue polypeptide: MARYLGPKLKLSRREGTDLFLKSGVRAIDTKCKLEQAPGQHGARKPRLSDYGVQLREKQKVRRIYGVLERQFRNYYKEATRLKGNTGENLLSLLEGRLDNVVYRMGFGATRAESRQMVSHKAIMVNGRVVNIASYQVSPNDVVSVREKSKKQSRIKAALELAEQREKPTWLEVDAVKMEGVFKRIPERADLSADINEHLIVELYSK.

One can recognise an S4 RNA-binding domain in the interval 96-156 (GRLDNVVYRM…EKSKKQSRIK (61 aa)).

It belongs to the universal ribosomal protein uS4 family. In terms of assembly, part of the 30S ribosomal subunit. Contacts protein S5. The interaction surface between S4 and S5 is involved in control of translational fidelity.

In terms of biological role, one of the primary rRNA binding proteins, it binds directly to 16S rRNA where it nucleates assembly of the body of the 30S subunit. Functionally, with S5 and S12 plays an important role in translational accuracy. In Photorhabdus laumondii subsp. laumondii (strain DSM 15139 / CIP 105565 / TT01) (Photorhabdus luminescens subsp. laumondii), this protein is Small ribosomal subunit protein uS4.